A 69-amino-acid chain; its full sequence is DNA-directed RNA polymerase subunit epsilon (69 aa).

Belongs to the RNA polymerase subunit epsilon family. In terms of assembly, RNAP is composed of a core of 2 alpha, a beta and a beta' subunit. The core is associated with a delta subunit, and at least one of epsilon or omega. When a sigma factor is associated with the core the holoenzyme is formed, which can initiate transcription.

It catalyses the reaction RNA(n) + a ribonucleoside 5'-triphosphate = RNA(n+1) + diphosphate. Its function is as follows. A non-essential component of RNA polymerase (RNAP). This is DNA-directed RNA polymerase subunit epsilon from Geobacillus sp. (strain WCH70).